Consider the following 278-residue polypeptide: Gamma carbonic anhydrase 2, mitochondrial (278 aa).

The transit peptide at 1-43 (MGTLGRAIYTVGNWIRGTGQALDRVGSLLQGSHRIEEHLSRHR) directs the protein to the mitochondrion. Substrate-binding positions include 86–88 (RGD) and 101–102 (QD). Zn(2+) contacts are provided by H107, H130, and H135. N209 lines the substrate pocket.

Belongs to the gamma-class carbonic anhydrase family. Homotrimer. Component of the mitochondrial oxidoreductase respiratory chain complex I; element of the extra matrix-exposed domain, which is attached to the membrane arm of this complex. Interacts with GAMMACAL1 and GAMMACAL2. Requires Zn(2+) as cofactor. Constitutively expressed in roots and leaves, with higher levels in flowers, particularly in tapetal tissue of anthers, inflorescence (IM) and floral meristems (FM).

The protein localises to the mitochondrion membrane. Functionally, enzyme involved in the catabolism of H(2)CO(3) but that does not mediates the reversible hydration of carbon dioxide. Mediates complex I assembly in mitochondria and respiration. Binds HCO(3)-. Required for male fertility during anther development and dehiscence to regulate the secondary thickenings of the endothecial cell wall, probably by modulating H(2)O(2)-dependent lignin polymerization. The polypeptide is Gamma carbonic anhydrase 2, mitochondrial (GAMMACA2) (Arabidopsis thaliana (Mouse-ear cress)).